The chain runs to 211 residues: Dual specificity phosphatase 29 (211 aa).

One can recognise a Tyrosine-protein phosphatase domain in the interval 47-192 (HVNEVWPGIY…LRTLDIQLAI (146 aa)). Substrate is bound at residue 136-143 (HCAMGRSR). Residue Cys-137 is the Phosphocysteine intermediate of the active site.

Belongs to the protein-tyrosine phosphatase family. Non-receptor class dual specificity subfamily.

The protein localises to the cytoplasm. Its subcellular location is the nucleus. It catalyses the reaction O-phospho-L-tyrosyl-[protein] + H2O = L-tyrosyl-[protein] + phosphate. The catalysed reaction is O-phospho-L-seryl-[protein] + H2O = L-seryl-[protein] + phosphate. The enzyme catalyses O-phospho-L-threonyl-[protein] + H2O = L-threonyl-[protein] + phosphate. Functionally, dual specificity phosphatase able to dephosphorylate phosphotyrosine, phosphoserine and phosphothreonine residues within the same substrate, with a preference for phosphotyrosine as a substrate. Involved in the modulation of AMPK and MAPK1/2 signaling pathways. The chain is Dual specificity phosphatase 29 (dusp29) from Callorhinchus milii (Ghost shark).